We begin with the raw amino-acid sequence, 935 residues long: Isoleucine--tRNA ligase (935 aa).

The short motif at 58–68 (PYANGNLHLGH) is the 'HIGH' region element. Glutamate 559 serves as a coordination point for L-isoleucyl-5'-AMP. A 'KMSKS' region motif is present at residues 600-604 (KMSKS). Lysine 603 contributes to the ATP binding site. Zn(2+)-binding residues include cysteine 898, cysteine 901, cysteine 918, and cysteine 921.

Belongs to the class-I aminoacyl-tRNA synthetase family. IleS type 1 subfamily. Monomer. Requires Zn(2+) as cofactor.

It is found in the cytoplasm. The enzyme catalyses tRNA(Ile) + L-isoleucine + ATP = L-isoleucyl-tRNA(Ile) + AMP + diphosphate. Catalyzes the attachment of isoleucine to tRNA(Ile). As IleRS can inadvertently accommodate and process structurally similar amino acids such as valine, to avoid such errors it has two additional distinct tRNA(Ile)-dependent editing activities. One activity is designated as 'pretransfer' editing and involves the hydrolysis of activated Val-AMP. The other activity is designated 'posttransfer' editing and involves deacylation of mischarged Val-tRNA(Ile). The chain is Isoleucine--tRNA ligase from Haemophilus ducreyi (strain 35000HP / ATCC 700724).